We begin with the raw amino-acid sequence, 358 residues long: Alanine racemase (358 aa).

K35 serves as the catalytic Proton acceptor; specific for D-alanine. Residue K35 is modified to N6-(pyridoxal phosphate)lysine. Position 130 (R130) interacts with substrate. Y255 acts as the Proton acceptor; specific for L-alanine in catalysis. Position 303 (M303) interacts with substrate.

The protein belongs to the alanine racemase family. The cofactor is pyridoxal 5'-phosphate.

The catalysed reaction is L-alanine = D-alanine. Its pathway is amino-acid biosynthesis; D-alanine biosynthesis; D-alanine from L-alanine: step 1/1. Catalyzes the interconversion of L-alanine and D-alanine. May also act on other amino acids. The polypeptide is Alanine racemase (alr) (Shewanella piezotolerans (strain WP3 / JCM 13877)).